The primary structure comprises 74 residues: ATP synthase subunit 9, mitochondrial (74 aa).

The next 2 helical transmembrane spans lie at 8-28 and 45-72; these read IGAGAATIASAGAAVGIGNVF and LFGYAILGFALTEAIALFALMMAFLILF.

The protein belongs to the ATPase C chain family. As to quaternary structure, F-type ATPases have 2 components, CF(1) - the catalytic core - and CF(0) - the membrane proton channel. CF(1) has five subunits: alpha(3), beta(3), gamma(1), delta(1), epsilon(1). CF(0) has three main subunits: a, b and c.

It is found in the mitochondrion membrane. In terms of biological role, this protein is one of the chains of the nonenzymatic membrane component (F0) of mitochondrial ATPase. This Pisum sativum (Garden pea) protein is ATP synthase subunit 9, mitochondrial (ATP9).